A 458-amino-acid polypeptide reads, in one-letter code: Cysteine--tRNA ligase (458 aa).

Cysteine 27 serves as a coordination point for Zn(2+). Residues 29 to 39 carry the 'HIGH' region motif; that stretch reads MTVYDYMHIGH. The Zn(2+) site is built by cysteine 208, histidine 233, and glutamate 237. The 'KMSKS' region signature appears at 265–269; the sequence is KMSKS. Lysine 268 lines the ATP pocket.

It belongs to the class-I aminoacyl-tRNA synthetase family. As to quaternary structure, monomer. It depends on Zn(2+) as a cofactor.

It is found in the cytoplasm. The catalysed reaction is tRNA(Cys) + L-cysteine + ATP = L-cysteinyl-tRNA(Cys) + AMP + diphosphate. The chain is Cysteine--tRNA ligase from Coxiella burnetii (strain Dugway 5J108-111).